Here is a 422-residue protein sequence, read N- to C-terminus: RNA exonuclease 4 (422 aa).

The tract at residues 1–194 is disordered; the sequence is MGKAKVPASK…APAPPTEEDI (194 aa). Ser-15 is modified (phosphoserine). A compositionally biased stretch (basic residues) spans 26–40; sequence LTRKKNKKKKRFWKS. 2 positions are modified to phosphoserine: Ser-96 and Ser-111. 2 stretches are compositionally biased toward basic and acidic residues: residues 106–127 and 151–176; these read NKKE…DQEA and GTEH…DIEH. A Glycyl lysine isopeptide (Lys-Gly) (interchain with G-Cter in SUMO2) cross-link involves residue Lys-115. Positions 243–394 constitute an Exonuclease domain; the sequence is ALALDCEMVG…QDAQAAMRLY (152 aa).

This sequence belongs to the REXO4 family. In terms of assembly, can bind ESR1 and ESR2. This interaction is abrogated by estrogen and augmented by tamoxifen treatment.

The protein localises to the nucleus. The protein resides in the nucleolus. The protein is RNA exonuclease 4 (REXO4) of Homo sapiens (Human).